Consider the following 576-residue polypeptide: Peptidoglycan D,D-transpeptidase FtsI (576 aa).

Residues 22–42 (ITILLSLIIITIILVLSRITF) form a helical membrane-spanning segment. The active-site Acyl-ester intermediate is Ser-308.

The protein belongs to the transpeptidase family. FtsI subfamily.

Its subcellular location is the cell inner membrane. The catalysed reaction is Preferential cleavage: (Ac)2-L-Lys-D-Ala-|-D-Ala. Also transpeptidation of peptidyl-alanyl moieties that are N-acyl substituents of D-alanine.. The protein operates within cell wall biogenesis; peptidoglycan biosynthesis. In terms of biological role, catalyzes cross-linking of the peptidoglycan cell wall at the division septum. The protein is Peptidoglycan D,D-transpeptidase FtsI of Buchnera aphidicola subsp. Baizongia pistaciae (strain Bp).